The sequence spans 254 residues: Pimeloyl-[acyl-carrier protein] methyl ester esterase (254 aa).

The 225-residue stretch at 14–238 folds into the AB hydrolase-1 domain; it reads VVMLHGWGLH…QASHAPFLSH (225 aa). Residues Trp20, 80-81, and 142-146 each bind substrate; these read SL and FLALQ. The active-site Nucleophile is the Ser80. Catalysis depends on residues Asp204 and His232. His232 contributes to the substrate binding site.

Belongs to the AB hydrolase superfamily. Carboxylesterase BioH family. In terms of assembly, monomer.

Its subcellular location is the cytoplasm. It carries out the reaction 6-carboxyhexanoyl-[ACP] methyl ester + H2O = 6-carboxyhexanoyl-[ACP] + methanol + H(+). Its pathway is cofactor biosynthesis; biotin biosynthesis. In terms of biological role, the physiological role of BioH is to remove the methyl group introduced by BioC when the pimeloyl moiety is complete. It allows to synthesize pimeloyl-ACP via the fatty acid synthetic pathway through the hydrolysis of the ester bonds of pimeloyl-ACP esters. This chain is Pimeloyl-[acyl-carrier protein] methyl ester esterase, found in Chromobacterium violaceum (strain ATCC 12472 / DSM 30191 / JCM 1249 / CCUG 213 / NBRC 12614 / NCIMB 9131 / NCTC 9757 / MK).